The following is a 701-amino-acid chain: Glycine--tRNA ligase beta subunit (701 aa).

It belongs to the class-II aminoacyl-tRNA synthetase family. As to quaternary structure, tetramer of two alpha and two beta subunits.

It localises to the cytoplasm. It carries out the reaction tRNA(Gly) + glycine + ATP = glycyl-tRNA(Gly) + AMP + diphosphate. The protein is Glycine--tRNA ligase beta subunit of Helicobacter pylori (strain HPAG1).